The following is a 150-amino-acid chain: Urease accessory protein UreE (150 aa).

It belongs to the UreE family.

Its subcellular location is the cytoplasm. Its function is as follows. Involved in urease metallocenter assembly. Binds nickel. Probably functions as a nickel donor during metallocenter assembly. The polypeptide is Urease accessory protein UreE (Staphylococcus aureus (strain MRSA252)).